Reading from the N-terminus, the 310-residue chain is Thiamine-monophosphate kinase (310 aa).

Mg(2+) is bound by residues Asp26, Thr40, Ser41, and Asp42. Asp49 contacts substrate. Mg(2+) contacts are provided by Asp70 and Asp118. ATP contacts are provided by residues 117–118 (GD) and Arg141. Mg(2+) is bound at residue Asp202. Ser204 is an ATP binding site. Asp205 contacts Mg(2+). Substrate contacts are provided by Glu251 and Trp299.

Belongs to the thiamine-monophosphate kinase family.

It catalyses the reaction thiamine phosphate + ATP = thiamine diphosphate + ADP. Its pathway is cofactor biosynthesis; thiamine diphosphate biosynthesis; thiamine diphosphate from thiamine phosphate: step 1/1. Its function is as follows. Catalyzes the ATP-dependent phosphorylation of thiamine-monophosphate (TMP) to form thiamine-pyrophosphate (TPP), the active form of vitamin B1. The chain is Thiamine-monophosphate kinase from Pyrococcus abyssi (strain GE5 / Orsay).